Here is a 111-residue protein sequence, read N- to C-terminus: SPbeta prophage-derived uncharacterized protein YopW (111 aa).

In Bacillus subtilis (strain 168), this protein is SPbeta prophage-derived uncharacterized protein YopW (yopW).